The sequence spans 365 residues: Zinc finger TRAF-type-containing protein 1-A (365 aa).

Positions 1–56 (MSEEREAPGPLASSSAGLGAEVGQEEVPGGAGPARLLLLPSDSDGPPKKRLRSEAE) are disordered. An RING-type; degenerate zinc finger spans residues 72-117 (CTVCLDLPKASVYQCTNGHLMCAGCFIHLLADSRLKEEQATCPNCR). Residues 113 to 186 (CPNCRCEISK…PWEGPYHELT (74 aa)) form a TRAF-type zinc finger.

It belongs to the ZFTRAF1 family.

The protein localises to the cytoplasm. In Xenopus laevis (African clawed frog), this protein is Zinc finger TRAF-type-containing protein 1-A.